Here is a 377-residue protein sequence, read N- to C-terminus: Erythronate-4-phosphate dehydrogenase (377 aa).

2 residues coordinate substrate: Ser-45 and Thr-67. NAD(+) contacts are provided by residues Asp-147, 210–212 (ASR), and Asp-236. Residue Arg-212 is part of the active site. Glu-241 is a catalytic residue. His-258 functions as the Proton donor in the catalytic mechanism. NAD(+) is bound at residue Gly-261. Tyr-262 serves as a coordination point for substrate.

The protein belongs to the D-isomer specific 2-hydroxyacid dehydrogenase family. PdxB subfamily. As to quaternary structure, homodimer.

The protein localises to the cytoplasm. The catalysed reaction is 4-phospho-D-erythronate + NAD(+) = (R)-3-hydroxy-2-oxo-4-phosphooxybutanoate + NADH + H(+). It functions in the pathway cofactor biosynthesis; pyridoxine 5'-phosphate biosynthesis; pyridoxine 5'-phosphate from D-erythrose 4-phosphate: step 2/5. Functionally, catalyzes the oxidation of erythronate-4-phosphate to 3-hydroxy-2-oxo-4-phosphonooxybutanoate. This chain is Erythronate-4-phosphate dehydrogenase, found in Aeromonas salmonicida (strain A449).